A 73-amino-acid chain; its full sequence is Large ribosomal subunit protein uL30 (73 aa).

This sequence belongs to the universal ribosomal protein uL30 family. As to quaternary structure, part of the 50S ribosomal subunit.

This chain is Large ribosomal subunit protein uL30, found in Borreliella afzelii (strain PKo) (Borrelia afzelii).